Reading from the N-terminus, the 163-residue chain is Large ribosomal subunit protein uL10 (163 aa).

The protein belongs to the universal ribosomal protein uL10 family. As to quaternary structure, part of the ribosomal stalk of the 50S ribosomal subunit. The N-terminus interacts with L11 and the large rRNA to form the base of the stalk. The C-terminus forms an elongated spine to which L12 dimers bind in a sequential fashion forming a multimeric L10(L12)X complex.

Forms part of the ribosomal stalk, playing a central role in the interaction of the ribosome with GTP-bound translation factors. This chain is Large ribosomal subunit protein uL10, found in Haemophilus influenzae (strain PittGG).